The primary structure comprises 81 residues: Small ribosomal subunit protein bS18 (81 aa).

This sequence belongs to the bacterial ribosomal protein bS18 family. In terms of assembly, part of the 30S ribosomal subunit. Forms a tight heterodimer with protein bS6.

Functionally, binds as a heterodimer with protein bS6 to the central domain of the 16S rRNA, where it helps stabilize the platform of the 30S subunit. The sequence is that of Small ribosomal subunit protein bS18 from Syntrophobacter fumaroxidans (strain DSM 10017 / MPOB).